Here is a 691-residue protein sequence, read N- to C-terminus: Lacticin-481/lactococcin-DR transport/processing ATP-binding protein lcnDR3 (691 aa).

A Peptidase C39 domain is found at 6–130 (QNNEQDCLLA…KKFSGYIITL (125 aa)). Residue C12 is part of the active site. An ABC transmembrane type-1 domain is found at 158–434 (TFLYIFSLFI…IQDVMFEISR (277 aa)). Helical transmembrane passes span 159–179 (FLYI…SIIL), 189–209 (ITYS…SLLM), 262–284 (GILL…IIYL), 289–311 (FTLT…SLIS), and 385–405 (ICVI…LVSI). The 226-residue stretch at 464 to 689 (IILKDISYSY…LLNDSYNSFV (226 aa)) folds into the ABC transporter domain. Residue 497–504 (GKSGSGKS) coordinates ATP.

It belongs to the ABC transporter superfamily.

It is found in the cell membrane. Functionally, probably implicated in the export process of the lantibiotic lacticin-481/lactococcin-DR. This Lactococcus lactis subsp. lactis (Streptococcus lactis) protein is Lacticin-481/lactococcin-DR transport/processing ATP-binding protein lcnDR3 (lcnDR3).